Consider the following 312-residue polypeptide: Ornithine carbamoyltransferase (312 aa).

Carbamoyl phosphate-binding positions include 57–60, Gln84, Arg108, and 135–138; these read STRT and HPCQ. Residues Asn166, Asp226, and 230 to 231 each bind L-ornithine; that span reads SM. Carbamoyl phosphate is bound by residues 265–266 and Arg293; that span reads CL.

It belongs to the aspartate/ornithine carbamoyltransferase superfamily. OTCase family.

It is found in the cytoplasm. The enzyme catalyses carbamoyl phosphate + L-ornithine = L-citrulline + phosphate + H(+). It participates in amino-acid biosynthesis; L-arginine biosynthesis; L-arginine from L-ornithine and carbamoyl phosphate: step 1/3. Functionally, reversibly catalyzes the transfer of the carbamoyl group from carbamoyl phosphate (CP) to the N(epsilon) atom of ornithine (ORN) to produce L-citrulline. The sequence is that of Ornithine carbamoyltransferase from Brucella ovis (strain ATCC 25840 / 63/290 / NCTC 10512).